Here is a 295-residue protein sequence, read N- to C-terminus: UDP-N-acetylenolpyruvoylglucosamine reductase (295 aa).

The FAD-binding PCMH-type domain maps to 24-188 (KVGGNAEIFF…LKVIFKINKG (165 aa)). Arg-168 is a catalytic residue. Ser-217 (proton donor) is an active-site residue. The active site involves Glu-287.

This sequence belongs to the MurB family. Requires FAD as cofactor.

The protein resides in the cytoplasm. The enzyme catalyses UDP-N-acetyl-alpha-D-muramate + NADP(+) = UDP-N-acetyl-3-O-(1-carboxyvinyl)-alpha-D-glucosamine + NADPH + H(+). Its pathway is cell wall biogenesis; peptidoglycan biosynthesis. Cell wall formation. This is UDP-N-acetylenolpyruvoylglucosamine reductase from Rickettsia rickettsii (strain Iowa).